The primary structure comprises 217 residues: UPF0319 protein VP1009 (217 aa).

Residues 1–21 (MRLKTWIVAFFLGLFGTTVNA) form the signal peptide.

Belongs to the UPF0319 family.

The chain is UPF0319 protein VP1009 from Vibrio parahaemolyticus serotype O3:K6 (strain RIMD 2210633).